Consider the following 545-residue polypeptide: Sterol O-acyltransferase 1 (545 aa).

The residue at position 1 (Met1) is an N-acetylmethionine. A disordered region spans residues 1-24 (MVGEETSLRNRLSRSAENPEQDEA). Residues 1–133 (MVGEETSLRN…LDELFEVDHI (133 aa)) lie on the Cytoplasmic side of the membrane. The residue at position 7 (Ser7) is a Phosphoserine. Residues 9–18 (RNRLSRSAEN) show a composition bias toward polar residues. His132 is a binding site for cholesterol. The helical transmembrane segment at 134 to 155 (RTIYHMFIALLIIFILSTLVVD) threads the bilayer. At 156–175 (YIDEGRLVLEFSLLAYAFGQ) the chain is on the lumenal side. The chain crosses the membrane as a helical span at residues 176 to 201 (FPIVIWTWWAMFLSTLAIPYFLFQRW). Residues 202 to 213 (AHGYSKSSHPLI) are Cytoplasmic-facing. Residues 214-239 (YSLIHGAFFLVFQLGILGFIPTYVVL) form a helical membrane-spanning segment. At 240-247 (AYTLPPAS) the chain is on the lumenal side. Residues 248-271 (RFILILEQIRLVMKAHSYVRENVP) form a helical membrane-spanning segment. Topologically, residues 272–314 (RVLSAAKEKSSTVPVPTVNQYLYFLFAPTLIYRDSYPRTPTVR) are cytoplasmic. The chain crosses the membrane as a helical span at residues 315-347 (WGYVAMQFLQVFGCLFYVYYIFERLCAPLFRNI). Residues 348–364 (KQEPFSARVLVLCVFNS) are Lumenal-facing. A helical membrane pass occupies residues 365 to 390 (ILPGVLMLFLSFFAFLHCWLNAFAEM). Over 391–438 (LRFGDRMFYKDWWNSTSYSNYYRTWNVVVHDWLYYYVYKDLLWFFSKR) the chain is Cytoplasmic. The FYXDWWN motif signature appears at 398–404 (FYKDWWN). Asn410, Arg413, Asn416, His420, Tyr428, and Ser451 together coordinate an acyl-CoA. The chain crosses the membrane as a helical span at residues 439 to 463 (FRPAAMLAVFALSAVVHEYALAVCL). His455 is a catalytic residue. The Lumenal segment spans residues 464 to 469 (SYFYPV). A helical transmembrane segment spans residues 470–485 (LFVLFMFFGMAFNFIV). The Cytoplasmic segment spans residues 486 to 491 (NDSRKR). A helical transmembrane segment spans residues 492–523 (PVWNIMVRASLFLGHGVILCFYSQEWYARQRC). Cysteines 523 and 541 form a disulfide. Residues 524–545 (PLKNPTFLDYVRPRTWTCRYVF) are Lumenal-facing.

It belongs to the membrane-bound acyltransferase family. Sterol o-acyltransferase subfamily. May form homo- or heterodimers. Interacts with UBIAD1.

The protein resides in the endoplasmic reticulum membrane. It catalyses the reaction a sterol + a long-chain fatty acyl-CoA = a long-chain 3-hydroxysterol ester + CoA. The catalysed reaction is cholesterol + an acyl-CoA = a cholesterol ester + CoA. It carries out the reaction cholesterol + (9Z)-octadecenoyl-CoA = cholesteryl (9Z-octadecenoate) + CoA. The enzyme catalyses cholesterol + hexadecanoyl-CoA = cholesteryl hexadecanoate + CoA. It catalyses the reaction octadecanoyl-CoA + cholesterol = cholesteryl octadecanoate + CoA. The catalysed reaction is (9Z,12Z)-octadecadienoyl-CoA + cholesterol = cholesteryl (9Z,12Z)-octadecadienoate + CoA. It carries out the reaction (5Z,8Z,11Z,14Z)-eicosatetraenoyl-CoA + cholesterol = cholesteryl (5Z,8Z,11Z,14Z)-eicosatetraenoate + CoA. The enzyme catalyses (9Z)-hexadecenoyl-CoA + cholesterol = cholesteryl (9Z)-hexadecenoate + CoA. It catalyses the reaction (11Z)-octadecenoyl-CoA + cholesterol = cholesteryl (11Z)-octadecenoate + CoA. The catalysed reaction is (7Z)-octadecenoyl-CoA + cholesterol = cholesteryl (7Z)-octadecenoate + CoA. Catalyzes the formation of fatty acid-cholesterol esters, which are less soluble in membranes than cholesterol. Plays a role in lipoprotein assembly and dietary cholesterol absorption. Preferentially utilizes oleoyl-CoA ((9Z)-octadecenoyl-CoA) as substrate: shows a higher activity towards an acyl-CoA substrate with a double bond at the delta-9 position (9Z) than towards saturated acyl-CoA or an unsaturated acyl-CoA with a double bond at the delta-7 (7Z) or delta-11 (11Z) positions. In Rattus norvegicus (Rat), this protein is Sterol O-acyltransferase 1.